Here is a 303-residue protein sequence, read N- to C-terminus: N-acetyl-D-glucosamine kinase (303 aa).

ATP is bound by residues 4 to 11 (GFDMGGTK) and 133 to 140 (GVGGGLIV). The Zn(2+) site is built by histidine 157, cysteine 177, cysteine 179, and cysteine 184.

The protein belongs to the ROK (NagC/XylR) family. NagK subfamily.

It catalyses the reaction N-acetyl-D-glucosamine + ATP = N-acetyl-D-glucosamine 6-phosphate + ADP + H(+). It participates in cell wall biogenesis; peptidoglycan recycling. In terms of biological role, catalyzes the phosphorylation of N-acetyl-D-glucosamine (GlcNAc) derived from cell-wall degradation, yielding GlcNAc-6-P. In Yersinia enterocolitica serotype O:8 / biotype 1B (strain NCTC 13174 / 8081), this protein is N-acetyl-D-glucosamine kinase.